The sequence spans 226 residues: Ribonuclease 3 (226 aa).

Positions 6 to 128 (INKLQRKLGY…LIGGVFLDSD (123 aa)) constitute an RNase III domain. Glu-41 provides a ligand contact to Mg(2+). The active site involves Asp-45. Positions 114 and 117 each coordinate Mg(2+). Glu-117 is a catalytic residue. One can recognise a DRBM domain in the interval 155–225 (DPKTRLQEFL…AEQALIKLGI (71 aa)).

Belongs to the ribonuclease III family. In terms of assembly, homodimer. Mg(2+) serves as cofactor.

It is found in the cytoplasm. The enzyme catalyses Endonucleolytic cleavage to 5'-phosphomonoester.. Digests double-stranded RNA. Involved in the processing of primary rRNA transcript to yield the immediate precursors to the large and small rRNAs (23S and 16S). Processes some mRNAs, and tRNAs when they are encoded in the rRNA operon. Processes pre-crRNA and tracrRNA of type II CRISPR loci if present in the organism. The polypeptide is Ribonuclease 3 (Erwinia tasmaniensis (strain DSM 17950 / CFBP 7177 / CIP 109463 / NCPPB 4357 / Et1/99)).